The primary structure comprises 427 residues: Glucose-1-phosphate adenylyltransferase (427 aa).

AMP-binding residues include R40, H46, and R52. Alpha-D-glucose 1-phosphate is bound at residue Y114. An AMP-binding site is contributed by R130. Residues G179, 194–195 (EK), and S212 contribute to the alpha-D-glucose 1-phosphate site. R386 serves as a coordination point for AMP.

Belongs to the bacterial/plant glucose-1-phosphate adenylyltransferase family. As to quaternary structure, homotetramer.

The enzyme catalyses alpha-D-glucose 1-phosphate + ATP + H(+) = ADP-alpha-D-glucose + diphosphate. It functions in the pathway glycan biosynthesis; glycogen biosynthesis. Allosterically activated by fructose-1,6-bisphosphate (F16BP) and inhibited by AMP. Involved in the biosynthesis of ADP-glucose, a building block required for the elongation reactions to produce glycogen. Catalyzes the reaction between ATP and alpha-D-glucose 1-phosphate (G1P) to produce pyrophosphate and ADP-Glc. In Cronobacter sakazakii (strain ATCC BAA-894) (Enterobacter sakazakii), this protein is Glucose-1-phosphate adenylyltransferase.